The following is a 406-amino-acid chain: Dihydroorotase, mitochondrial (406 aa).

The N-terminal 41 residues, 1 to 41 (MQTAATSTFFANPHVKHLPGPFLRPSPHYGALVHLPSFRNK), are a transit peptide targeting the mitochondrion. Zn(2+) is bound by residues His-69, His-71, Lys-155, His-193, His-231, and Asp-305. Lys-155 bears the N6-carboxylysine mark.

The protein belongs to the metallo-dependent hydrolases superfamily. DHOase family. Class II DHOase subfamily. Zn(2+) is required as a cofactor.

Its subcellular location is the mitochondrion. The enzyme catalyses (S)-dihydroorotate + H2O = N-carbamoyl-L-aspartate + H(+). It participates in pyrimidine metabolism; UMP biosynthesis via de novo pathway; (S)-dihydroorotate from bicarbonate: step 3/3. This chain is Dihydroorotase, mitochondrial (PYRC), found in Oryza sativa subsp. japonica (Rice).